The primary structure comprises 469 residues: D-3-phosphoglycerate dehydrogenase 1 (469 aa).

3 positions are modified to phosphoserine: S22, S29, and S33. NAD(+)-binding positions include 208–209 (HI), D228, 285–287 (ASR), and D311. Residue R287 is part of the active site. The active site involves E316. The Proton donor role is filled by H347. 347-350 (HIGG) serves as a coordination point for NAD(+). The ACT domain occupies 399–469 (RVLYIHQNVP…SAKISIRLLY (71 aa)).

The protein belongs to the D-isomer specific 2-hydroxyacid dehydrogenase family.

The enzyme catalyses (2R)-3-phosphoglycerate + NAD(+) = 3-phosphooxypyruvate + NADH + H(+). The catalysed reaction is (R)-2-hydroxyglutarate + NAD(+) = 2-oxoglutarate + NADH + H(+). Its pathway is amino-acid biosynthesis; L-serine biosynthesis; L-serine from 3-phospho-D-glycerate: step 1/3. Catalyzes the reversible oxidation of 3-phospho-D-glycerate to 3-phosphonooxypyruvate, the first step of the phosphorylated L-serine biosynthesis pathway. Also catalyzes the reversible oxidation of 2-hydroxyglutarate to 2-oxoglutarate. The sequence is that of D-3-phosphoglycerate dehydrogenase 1 (SER3) from Saccharomyces cerevisiae (strain ATCC 204508 / S288c) (Baker's yeast).